The primary structure comprises 232 residues: MEQGKKETPTVYLHDIKREYTQGETRLTILDSTKLALWAGQSVALVAPSGSGKSTLLHIAGLLESPDAGEVYIGGIATSGLSDVERTQIRRTDIGFVYQSHRLLPEFTALENVMLPQMIRGLKRAETVKRAQEILAYLGLEDRVTHRPAELSGGEQQRVAIARAVANAPRVLLADEPTGNLDPQTADHVFNALMQLVKATRVSMLIATHNMELADRMDRRVSLENGHVVELD.

The region spanning V11–L231 is the ABC transporter domain. A47–S54 is an ATP binding site.

The protein belongs to the ABC transporter superfamily. Lipoprotein translocase (TC 3.A.1.125) family. In terms of assembly, the complex is composed of two ATP-binding proteins (LolD) and two transmembrane proteins (LolC and LolE).

Its subcellular location is the cell inner membrane. In terms of biological role, part of the ABC transporter complex LolCDE involved in the translocation of mature outer membrane-directed lipoproteins, from the inner membrane to the periplasmic chaperone, LolA. Responsible for the formation of the LolA-lipoprotein complex in an ATP-dependent manner. The polypeptide is Lipoprotein-releasing system ATP-binding protein LolD (Nitrobacter winogradskyi (strain ATCC 25391 / DSM 10237 / CIP 104748 / NCIMB 11846 / Nb-255)).